Here is a 440-residue protein sequence, read N- to C-terminus: C4-dicarboxylate transport protein (440 aa).

The next 8 membrane-spanning stretches (helical) occupy residues 8-28 (LYLQ…LFPA), 40-60 (FIKL…VTGI), 74-94 (LKGL…GLVV), 147-167 (GDIL…AALK), 187-207 (IVGF…AFTV), 221-241 (LIAC…GLVL), 288-308 (VVGL…SIYL), and 354-374 (AATL…LLGV). The interval 419 to 440 (DEVEPANDPEPPAMAAGLGLHG) is disordered.

This sequence belongs to the dicarboxylate/amino acid:cation symporter (DAACS) (TC 2.A.23) family.

Its subcellular location is the cell inner membrane. Its function is as follows. Responsible for the transport of dicarboxylates such as succinate, fumarate, and malate from the periplasm across the membrane. The protein is C4-dicarboxylate transport protein of Anaeromyxobacter dehalogenans (strain 2CP-C).